We begin with the raw amino-acid sequence, 270 residues long: Basigin (270 aa).

The first 21 residues, 1-21 (MAAVLFALLALALLRAGGASA), serve as a signal peptide directing secretion. The Ig-like C2-type domain maps to 22 to 103 (AAGTVTTSVQ…TGEATLTVDG (82 aa)). The Extracellular segment spans residues 22–207 (AAGTVTTSVQ…VTLRVRSRLA (186 aa)). Cystine bridges form between Cys41-Cys87 and Cys126-Cys185. Asn44, Asn75, Asn152, and Asn186 each carry an N-linked (GlcNAc...) asparagine glycan. One can recognise an Ig-like V-type domain in the interval 105–203 (PRIKAVKKSE…DAAVVTLRVR (99 aa)). Residues 208–228 (ALWPFLGIVAEVLVLVTVIFI) traverse the membrane as a helical segment. At 229-270 (YEKRRKPDEVLDDEDAGAAPLKSSGHHVNDDKGKNVRQRNAS) the chain is on the cytoplasmic side. The tract at residues 239–270 (LDDEDAGAAPLKSSGHHVNDDKGKNVRQRNAS) is disordered. Residue Ser252 is modified to Phosphoserine.

As to quaternary structure, homooligomer. Interacts with VEGFA, KDR/VEGFR2, PPIA/CYPA, SLC1A3, SLC16A12, SLC16A11, ATP1B2, MAG, L1CAM and AJAP1. Interacts with PPIL2; regulates BSG transport to the cell membrane. Interacts with XKR8; promoting its localization at the cell membrane. Interacts with SLC16A3; interaction mediates SLC16A3 targeting to the plasma membrane. Interacts with SLC16A1; interaction mediates SLC16A1 targeting to the plasma membrane. Interacts with SLC16A6; this interaction mediates targeting to the plasma membrane.

The protein resides in the cell membrane. It localises to the endoplasmic reticulum membrane. It is found in the basolateral cell membrane. In terms of biological role, signaling receptor for cyclophilins, essential for PPIA/CYPA and PPIB/CYPB-dependent signaling related to chemotaxis and adhesion of immune cells. Plays an important role in targeting the monocarboxylate transporters SLC16A1/GLUT1, SLC16A3, SLC16A8, SLC16A11 and SLC16A12 to the plasma membrane. Acts as a coreceptor for vascular endothelial growth factor receptor 2 (KDR/VEGFR2) in endothelial cells enhancing its VEGFA-mediated activation and downstream signaling. Promotes angiogenesis through EPAS1/HIF2A-mediated up-regulation of VEGFA and KDR/VEGFR2 in endothelial cells. The protein is Basigin (BSG) of Oryctolagus cuniculus (Rabbit).